We begin with the raw amino-acid sequence, 505 residues long: MEELQGYLEIDGFRQHHFLYPLLLQEYIYALAHDHGLNGSILSEPMENFSHDNKSSSLIVKRLITRMHQQNHLIISVNDSNQKGFVGHNKNLYSQRISEGFAVIVEIPFSLQLVFSLEEKEIAKSHNSRSIHSIFPFFEDKLSHLNHVSNILIPYPIHPEILVQTLRCWIQDAPSLHLLRFFLHEYWNSNSLITLKKSISFFSKANQRLFLFLYNSHVYECESVFIFLRKQSSHLRSTFSGSFLERTHFYGKIEHLVVVLGNDFQKTLWLFKDPFMHYVRYQGKSILASRGTPFLMKKWKYHLVNFWQCHFYLWSQPDRIHINQLCNHSFYFLGYLSSVQLNSSVVRSQMLENSFLMDTAIKKFETIVPIIPLIGSLAKAKFCNVSGHPISKPFRTDLSDSEILNRFGRICKNLSHYHSGSSKKQSLYRIKFILRLSCARTLSRKHKSTVRAFLKRLGSELLEEFLTEEEQVLSLIFPRTPSHRPHRERIWYLDIICINDLANHE.

It belongs to the intron maturase 2 family. MatK subfamily.

Its subcellular location is the plastid. The protein localises to the chloroplast. Usually encoded in the trnK tRNA gene intron. Probably assists in splicing its own and other chloroplast group II introns. The polypeptide is Maturase K (Idiospermum australiense (Ribbonwood tree)).